A 178-amino-acid chain; its full sequence is GTP-dependent dephospho-CoA kinase (178 aa).

GTP is bound by residues Asp-55, Val-57, Asp-74, Lys-76, and Glu-127.

Belongs to the GTP-dependent DPCK family.

It carries out the reaction 3'-dephospho-CoA + GTP = GDP + CoA + H(+). Its pathway is cofactor biosynthesis; coenzyme A biosynthesis. In terms of biological role, catalyzes the GTP-dependent phosphorylation of the 3'-hydroxyl group of dephosphocoenzyme A to form coenzyme A (CoA). The sequence is that of GTP-dependent dephospho-CoA kinase from Saccharolobus islandicus (strain Y.G.57.14 / Yellowstone #1) (Sulfolobus islandicus).